A 122-amino-acid chain; its full sequence is MIQMQTILDVADNSGAKKLFCIKVLGGSKRKYAGVGDIVVCSVREALPNSKVKKGDVVKAVIVRTAKELGRPDGSYIRFDNNSGVVINNAKEPVGTRIFGPVARELRAKKFMKIISLAPEVL.

Belongs to the universal ribosomal protein uL14 family. Part of the 50S ribosomal subunit. Forms a cluster with proteins L3 and L19. In the 70S ribosome, L14 and L19 interact and together make contacts with the 16S rRNA in bridges B5 and B8.

Binds to 23S rRNA. Forms part of two intersubunit bridges in the 70S ribosome. This Trichlorobacter lovleyi (strain ATCC BAA-1151 / DSM 17278 / SZ) (Geobacter lovleyi) protein is Large ribosomal subunit protein uL14.